Consider the following 179-residue polypeptide: Large ribosomal subunit protein uL5 (179 aa).

The protein belongs to the universal ribosomal protein uL5 family. Part of the 50S ribosomal subunit; part of the 5S rRNA/L5/L18/L25 subcomplex. Contacts the 5S rRNA and the P site tRNA. Forms a bridge to the 30S subunit in the 70S ribosome.

Functionally, this is one of the proteins that bind and probably mediate the attachment of the 5S RNA into the large ribosomal subunit, where it forms part of the central protuberance. In the 70S ribosome it contacts protein S13 of the 30S subunit (bridge B1b), connecting the 2 subunits; this bridge is implicated in subunit movement. Contacts the P site tRNA; the 5S rRNA and some of its associated proteins might help stabilize positioning of ribosome-bound tRNAs. This chain is Large ribosomal subunit protein uL5, found in Enterobacter sp. (strain 638).